A 660-amino-acid polypeptide reads, in one-letter code: Bifunctional polymyxin resistance protein ArnA (660 aa).

The tract at residues 1 to 304 (MKTVVFAYHD…TLGLVQGSRL (304 aa)) is formyltransferase ArnAFT. (6R)-10-formyltetrahydrofolate is bound at residue 86 to 88 (HLI). His-104 (proton donor; for formyltransferase activity) is an active-site residue. Residues Arg-114 and 136–140 (VKRAD) each bind (6R)-10-formyltetrahydrofolate. Positions 314–660 (RRTRVLILGV…RTVDLTDKPS (347 aa)) are dehydrogenase ArnADH. NAD(+)-binding positions include Asp-347 and 368 to 369 (DI). Residues Ala-393, Tyr-398, and 432-433 (TS) contribute to the UDP-alpha-D-glucuronate site. Glu-434 functions as the Proton acceptor; for decarboxylase activity in the catalytic mechanism. UDP-alpha-D-glucuronate is bound by residues Arg-460, Asn-492, 526–535 (KLIDGGKQKR), and Tyr-613. The active-site Proton donor; for decarboxylase activity is Arg-619.

The protein in the N-terminal section; belongs to the Fmt family. UDP-L-Ara4N formyltransferase subfamily. It in the C-terminal section; belongs to the NAD(P)-dependent epimerase/dehydratase family. UDP-glucuronic acid decarboxylase subfamily. In terms of assembly, homohexamer, formed by a dimer of trimers.

The enzyme catalyses UDP-alpha-D-glucuronate + NAD(+) = UDP-beta-L-threo-pentopyranos-4-ulose + CO2 + NADH. It catalyses the reaction UDP-4-amino-4-deoxy-beta-L-arabinose + (6R)-10-formyltetrahydrofolate = UDP-4-deoxy-4-formamido-beta-L-arabinose + (6S)-5,6,7,8-tetrahydrofolate + H(+). Its pathway is nucleotide-sugar biosynthesis; UDP-4-deoxy-4-formamido-beta-L-arabinose biosynthesis; UDP-4-deoxy-4-formamido-beta-L-arabinose from UDP-alpha-D-glucuronate: step 1/3. The protein operates within nucleotide-sugar biosynthesis; UDP-4-deoxy-4-formamido-beta-L-arabinose biosynthesis; UDP-4-deoxy-4-formamido-beta-L-arabinose from UDP-alpha-D-glucuronate: step 3/3. It functions in the pathway bacterial outer membrane biogenesis; lipopolysaccharide biosynthesis. Its function is as follows. Bifunctional enzyme that catalyzes the oxidative decarboxylation of UDP-glucuronic acid (UDP-GlcUA) to UDP-4-keto-arabinose (UDP-Ara4O) and the addition of a formyl group to UDP-4-amino-4-deoxy-L-arabinose (UDP-L-Ara4N) to form UDP-L-4-formamido-arabinose (UDP-L-Ara4FN). The modified arabinose is attached to lipid A and is required for resistance to polymyxin and cationic antimicrobial peptides. This Escherichia coli O6:H1 (strain CFT073 / ATCC 700928 / UPEC) protein is Bifunctional polymyxin resistance protein ArnA.